The sequence spans 317 residues: 4-diphosphocytidyl-2-C-methyl-D-erythritol kinase (317 aa).

K11 is a catalytic residue. 99 to 109 (PVAAGLAGGST) lines the ATP pocket. The active site involves D141.

This sequence belongs to the GHMP kinase family. IspE subfamily.

It catalyses the reaction 4-CDP-2-C-methyl-D-erythritol + ATP = 4-CDP-2-C-methyl-D-erythritol 2-phosphate + ADP + H(+). It functions in the pathway isoprenoid biosynthesis; isopentenyl diphosphate biosynthesis via DXP pathway; isopentenyl diphosphate from 1-deoxy-D-xylulose 5-phosphate: step 3/6. Catalyzes the phosphorylation of the position 2 hydroxy group of 4-diphosphocytidyl-2C-methyl-D-erythritol. This Trichormus variabilis (strain ATCC 29413 / PCC 7937) (Anabaena variabilis) protein is 4-diphosphocytidyl-2-C-methyl-D-erythritol kinase.